A 559-amino-acid polypeptide reads, in one-letter code: Phenylalanine--tRNA ligase beta subunit (559 aa).

The B5 domain maps to 274–350 (FEPKIIDVHT…LGYGFNELPA (77 aa)). Mg(2+)-binding residues include D328, D334, E337, and N338.

Belongs to the phenylalanyl-tRNA synthetase beta subunit family. Type 2 subfamily. As to quaternary structure, tetramer of two alpha and two beta subunits. Mg(2+) is required as a cofactor.

The protein localises to the cytoplasm. The enzyme catalyses tRNA(Phe) + L-phenylalanine + ATP = L-phenylalanyl-tRNA(Phe) + AMP + diphosphate + H(+). In Methanosphaera stadtmanae (strain ATCC 43021 / DSM 3091 / JCM 11832 / MCB-3), this protein is Phenylalanine--tRNA ligase beta subunit.